The chain runs to 892 residues: Alanine--tRNA ligase (892 aa).

4 residues coordinate Zn(2+): H596, H600, C700, and H704.

Belongs to the class-II aminoacyl-tRNA synthetase family. The cofactor is Zn(2+).

The protein resides in the cytoplasm. It catalyses the reaction tRNA(Ala) + L-alanine + ATP = L-alanyl-tRNA(Ala) + AMP + diphosphate. Catalyzes the attachment of alanine to tRNA(Ala) in a two-step reaction: alanine is first activated by ATP to form Ala-AMP and then transferred to the acceptor end of tRNA(Ala). Also edits incorrectly charged Ser-tRNA(Ala) and Gly-tRNA(Ala) via its editing domain. The polypeptide is Alanine--tRNA ligase (Methanococcus vannielii (strain ATCC 35089 / DSM 1224 / JCM 13029 / OCM 148 / SB)).